Here is a 198-residue protein sequence, read N- to C-terminus: Glycerol-3-phosphate acyltransferase (198 aa).

The next 6 membrane-spanning stretches (helical) occupy residues 1 to 21 (MHILIISISYFLGSLPTGFLF), 50 to 70 (WPAFFVFIIDVGKGLIAVKIA), 77 to 97 (NLFEVLAGIAAISGHIWPIWL), 111 to 131 (MFIALSWKIGFASLGIFLIIL), 136 to 156 (IVSLSSISAAIFLPFLMFLDI), and 157 to 177 (GSTNHPYFFISLVVSILVIWK).

The protein belongs to the PlsY family. Probably interacts with PlsX.

It localises to the cell inner membrane. It catalyses the reaction an acyl phosphate + sn-glycerol 3-phosphate = a 1-acyl-sn-glycero-3-phosphate + phosphate. It participates in lipid metabolism; phospholipid metabolism. In terms of biological role, catalyzes the transfer of an acyl group from acyl-phosphate (acyl-PO(4)) to glycerol-3-phosphate (G3P) to form lysophosphatidic acid (LPA). This enzyme utilizes acyl-phosphate as fatty acyl donor, but not acyl-CoA or acyl-ACP. The protein is Glycerol-3-phosphate acyltransferase of Prochlorococcus marinus subsp. pastoris (strain CCMP1986 / NIES-2087 / MED4).